The chain runs to 140 residues: Large ribosomal subunit protein bL17 (140 aa).

This sequence belongs to the bacterial ribosomal protein bL17 family. As to quaternary structure, part of the 50S ribosomal subunit. Contacts protein L32.

The chain is Large ribosomal subunit protein bL17 from Roseobacter denitrificans (strain ATCC 33942 / OCh 114) (Erythrobacter sp. (strain OCh 114)).